The sequence spans 305 residues: tRNA dimethylallyltransferase 1 (305 aa).

Residue 10-17 (GPTASGKS) coordinates ATP. A substrate-binding site is contributed by 12–17 (TASGKS). An interaction with substrate tRNA region spans residues 35-38 (DSLT).

The protein belongs to the IPP transferase family. Monomer. Mg(2+) is required as a cofactor.

It catalyses the reaction adenosine(37) in tRNA + dimethylallyl diphosphate = N(6)-dimethylallyladenosine(37) in tRNA + diphosphate. Catalyzes the transfer of a dimethylallyl group onto the adenine at position 37 in tRNAs that read codons beginning with uridine, leading to the formation of N6-(dimethylallyl)adenosine (i(6)A). This Trichlorobacter lovleyi (strain ATCC BAA-1151 / DSM 17278 / SZ) (Geobacter lovleyi) protein is tRNA dimethylallyltransferase 1.